A 639-amino-acid polypeptide reads, in one-letter code: Protein P1 (639 aa).

The N-terminal stretch at 1 to 20 (MNRFTAYAALFFMFSLCSTA) is a signal peptide. Helical transmembrane passes span 121-141 (AASVTLWAIINIWFGLYWTLA), 144-164 (ITLFLWTFSIEALCLILLGCI), and 172-192 (ALSLSEHLPVFLFMSPLKIIW). A Peptidase S39 domain is found at 207–399 (VEGYKGFSVP…GITSPNYVFE (193 aa)). Residues His-255, Asp-286, and Ser-354 each act as for protease activity in the active site. Disordered stretches follow at residues 455–515 (ATNA…PPMD) and 539–639 (VSRV…NSKA). Positions 463–488 (TAQTNSAEKTAPSTSAEKTALTNKPL) are enriched in polar residues. The span at 548–561 (QKPKQKKRGRRGGK) shows a compositional bias: basic residues. Positions 566–577 (SLPPTSTQSTSG) are enriched in polar residues. Residues 587–602 (ASGSAGTSRATTTPAP) show a composition bias toward low complexity.

This sequence belongs to the peptidase S39B family. Specific enzymatic cleavages in vivo yield mature proteins. The protease probably cleaves itself and releases the VPg protein. The VPg protein is probably further cleaved in its C-terminus.

It is found in the membrane. In terms of biological role, precursor from which the VPg molecule is probably released at the onset of the RNA synthesis. Essential for virus replication. Participates, together with the proteins P0 and P7, in the inhibition of the induction of aphid-induced host phytohormones. This could play a role in the attraction to the infected plants by aphids. This is Protein P1 from Solanum tuberosum (Potato).